The sequence spans 584 residues: N(6)-adenosine-methyltransferase subunit METTL3 (584 aa).

Disordered stretches follow at residues 1 to 65 (MSDT…EHPP) and 162 to 221 (KADD…SNKV). Positions 187 to 204 (RKSSVSLATASISQLTAS) are enriched in polar residues. The Nuclear localization signal signature appears at 213–220 (DKKGRSNK). Residues 381-382 (DI) and aspartate 399 each bind S-adenosyl-L-methionine. Residues 400–414 (PPWDIHMELPYGTLT) are gate loop 1. Interaction with METTL14 regions lie at residues 454–458 (DRVDE) and 468–484 (QRII…NHGK). An interphase loop region spans residues 466–483 (QLQRIIRTGRTGHWLNHG). The tract at residues 469–482 (RIIRTGRTGHWLNH) is positively charged region required for RNA-binding. The tract at residues 511 to 519 (VRSTSHKPD) is gate loop 2. S-adenosyl-L-methionine is bound by residues lysine 517, 540–543 (RPHN), and 553–554 (NQ).

It belongs to the MT-A70-like family. In terms of assembly, heterodimer; heterodimerizes with mettl14 to form an antiparallel heterodimer that constitutes an active methyltransferase. Component of the WMM complex, a N6-methyltransferase complex composed of a catalytic subcomplex, named MAC, and of an associated subcomplex, named MACOM. The MAC subcomplex is composed of mettl3 and mettl14. Expressed in the hemato-vascular system: enriched in sorted endothelial cells and haemogenic endothelium.

It is found in the nucleus. Its subcellular location is the nucleus speckle. The protein localises to the cytoplasm. The catalysed reaction is an adenosine in mRNA + S-adenosyl-L-methionine = an N(6)-methyladenosine in mRNA + S-adenosyl-L-homocysteine + H(+). In terms of biological role, the METTL3-METTL14 heterodimer forms a N6-methyltransferase complex that methylates adenosine residues at the N(6) position of some RNAs and regulates various processes such as the circadian clock, differentiation of embryonic and hematopoietic stem cells, cortical neurogenesis, response to DNA damage, differentiation of T-cells and primary miRNA processing. In the heterodimer formed with mettl14, mettl3 constitutes the catalytic core. N6-methyladenosine (m6A), which takes place at the 5'-[AG]GAC-3' consensus sites of some mRNAs, plays a role in mRNA stability, processing and translation efficiency. M6A is also involved in hematopoietic stem cells specification: m6A methylation and subsequent destabilization of mRNAs, such as notch1a, leads to decreased Notch signaling, promoting endothelial to hematopoietic transition. M6A also takes place in other RNA molecules, such as primary miRNA (pri-miRNAs). Mediates methylation of pri-miRNAs. The chain is N(6)-adenosine-methyltransferase subunit METTL3 from Danio rerio (Zebrafish).